We begin with the raw amino-acid sequence, 408 residues long: Putative glutamate--cysteine ligase 2 (408 aa).

It belongs to the glutamate--cysteine ligase type 2 family. YbdK subfamily.

It carries out the reaction L-cysteine + L-glutamate + ATP = gamma-L-glutamyl-L-cysteine + ADP + phosphate + H(+). Functionally, ATP-dependent carboxylate-amine ligase which exhibits weak glutamate--cysteine ligase activity. The sequence is that of Putative glutamate--cysteine ligase 2 from Bradyrhizobium sp. (strain BTAi1 / ATCC BAA-1182).